Here is a 141-residue protein sequence, read N- to C-terminus: Mitochondrial import inner membrane translocase subunit tim16 (141 aa).

A J-like region spans residues 59 to 117 (EACKILNVNKPADGTAANMEEVMERFKRLFDANDPEKGGSFYLQSKVVRARERLEAEIK). The segment at 119–141 (KMEEKQAEEEVKEGWNPKIYKDR) is disordered.

Belongs to the TIM16/PAM16 family. Heterodimer with tim14/pam18. Component of the PAM complex, at least composed of hsp70-5/ssc1, grpe/mge1, tim44, un-4/pam16, pam17 and tim14/pam18.

The protein localises to the mitochondrion inner membrane. Essential component of the PAM complex, a complex required for the translocation of transit peptide-containing proteins from the inner membrane into the mitochondrial matrix in an ATP-dependent manner. In the complex, it is required to regulate activity of mtHSP70 (hsp70-5) via its interaction with tim14/pam18. May act by positioning tim14/pam18 in juxtaposition to mtHSP70 at the translocon to maximize ATPase stimulation. The chain is Mitochondrial import inner membrane translocase subunit tim16 (un-4) from Neurospora crassa (strain ATCC 24698 / 74-OR23-1A / CBS 708.71 / DSM 1257 / FGSC 987).